A 131-amino-acid polypeptide reads, in one-letter code: Classical arabinogalactan protein 1 (131 aa).

The signal sequence occupies residues 1-22; it reads MAFSKSLVFVLLAALLISSAVA. The segment at 22-110 is disordered; it reads AQSPAPAPSN…APGPAQGGAV (89 aa). Over residues 50 to 60 the composition is skewed to pro residues; the sequence is APAPEVSPSPS. Low complexity predominate over residues 61–72; sequence PAAALTPESSAS. G108 is lipidated: GPI-anchor amidated glycine. Positions 109–131 are cleaved as a propeptide — removed in mature form; that stretch reads AVSNKFASFGSVAVMLTAAVLVI.

This sequence belongs to the classical AGP family. O-glycosylated on the hydroxyproline residues. As to expression, predominantly expressed in flowers and at a lower level in roots and leaves.

Its subcellular location is the cell membrane. In terms of biological role, proteoglycan that seems to be implicated in diverse developmental roles such as differentiation, cell-cell recognition, embryogenesis and programmed cell death. This chain is Classical arabinogalactan protein 1 (AGP1), found in Arabidopsis thaliana (Mouse-ear cress).